A 675-amino-acid polypeptide reads, in one-letter code: Putative L-type lectin-domain containing receptor kinase I.11 (675 aa).

The N-terminal stretch at 1-22 is a signal peptide; it reads MASERLHLILLVFFNHLTFLLS. Topologically, residues 23–292 are extracellular; sequence QQEEAGFIYN…PKAKQEQTSP (270 aa). A legume-lectin like region spans residues 27 to 263; it reads AGFIYNGFGQ…YQYILGWSFS (237 aa). N-linked (GlcNAc...) asparagine glycans are attached at residues Asn60, Asn129, Asn186, Asn209, and Asn230. Residues 293–313 traverse the membrane as a helical segment; sequence LLIVLLMLLVLIMLAVLGGIY. Residues 314 to 675 are Cytoplasmic-facing; sequence LYRRKKYAEV…THTITYGDGR (362 aa). Residues 348 to 620 form the Protein kinase domain; the sequence is FDKDGRLGKG…QVIQYINQNL (273 aa). Residues 354–362 and Lys376 each bind ATP; that span reads LGKGGFGEV. Asp472 acts as the Proton acceptor in catalysis.

This sequence in the C-terminal section; belongs to the protein kinase superfamily. Ser/Thr protein kinase family. It in the N-terminal section; belongs to the leguminous lectin family.

The protein resides in the cell membrane. It carries out the reaction L-seryl-[protein] + ATP = O-phospho-L-seryl-[protein] + ADP + H(+). It catalyses the reaction L-threonyl-[protein] + ATP = O-phospho-L-threonyl-[protein] + ADP + H(+). In Arabidopsis thaliana (Mouse-ear cress), this protein is Putative L-type lectin-domain containing receptor kinase I.11 (LECRK111).